Here is a 207-residue protein sequence, read N- to C-terminus: TM2 domain-containing protein 1 (207 aa).

The first 37 residues, 1-37 (MAAAWPSGPSAPEAVTARLVGVLWFVSVTTGPWGAVA), serve as a signal peptide directing secretion. Topologically, residues 40 to 128 (AGGEESLKCE…YSYKVAVALS (89 aa)) are extracellular. 4 N-linked (GlcNAc...) asparagine glycosylation sites follow: Asn-72, Asn-75, Asn-87, and Asn-96. The region spanning 118 to 166 (GYSYKVAVALSLFLGWLGADRFYLGYPALGLLKFCTVGFCGIGSLIDFI) is the TM2 domain. A helical transmembrane segment spans residues 129–149 (LFLGWLGADRFYLGYPALGLL). At 150–153 (KFCT) the chain is on the cytoplasmic side. A helical transmembrane segment spans residues 154–174 (VGFCGIGSLIDFILISMQIVG). The Extracellular portion of the chain corresponds to 175-207 (PSDGSSYIIDYYGTRLTRLSITNETFRKTQLYP). Asn-197 carries N-linked (GlcNAc...) asparagine glycosylation.

Belongs to the TM2 family. In terms of assembly, interacts with APP beta-APP42 (amyloid-beta protein 42). Post-translationally, N-glycosylated. As to expression, widely expressed.

It is found in the membrane. May participate in amyloid-beta-induced apoptosis via its interaction with beta-APP42. This Homo sapiens (Human) protein is TM2 domain-containing protein 1 (TM2D1).